The sequence spans 113 residues: Mitochondrial zinc maintenance protein 1, mitochondrial (113 aa).

It belongs to the complex I LYR family. MZM1 subfamily. In terms of assembly, interacts with RIP1.

It is found in the mitochondrion matrix. In terms of biological role, assembly factor required for Rieske Fe-S protein RIP1 incorporation into the cytochrome b-c1 (CIII) complex. Functions as a chaperone, binding to this subunit within the mitochondrial matrix and stabilizing it prior to its translocation and insertion into the late CIII dimeric intermediate within the mitochondrial inner membrane. Modulates the mitochondrial matrix zinc pool. This Talaromyces stipitatus (strain ATCC 10500 / CBS 375.48 / QM 6759 / NRRL 1006) (Penicillium stipitatum) protein is Mitochondrial zinc maintenance protein 1, mitochondrial (MZM1).